A 471-amino-acid polypeptide reads, in one-letter code: Trigger factor (471 aa).

A PPIase FKBP-type domain is found at 166–245 (DDFITIDINA…LTAVKVRELP (80 aa)). Residues 442 to 471 (AAGVTGEDDDTEAEEERVTVSADDPGAARF) form a disordered region. The span at 447-456 (GEDDDTEAEE) shows a compositional bias: acidic residues.

Belongs to the FKBP-type PPIase family. Tig subfamily.

The protein resides in the cytoplasm. It catalyses the reaction [protein]-peptidylproline (omega=180) = [protein]-peptidylproline (omega=0). Functionally, involved in protein export. Acts as a chaperone by maintaining the newly synthesized protein in an open conformation. Functions as a peptidyl-prolyl cis-trans isomerase. This is Trigger factor from Renibacterium salmoninarum (strain ATCC 33209 / DSM 20767 / JCM 11484 / NBRC 15589 / NCIMB 2235).